The sequence spans 246 residues: Ly6/PLAUR domain-containing protein 4 (246 aa).

Residues 1–26 (MGPQHLSPMQLLCLLGAISSLPWAEA) form the signal peptide. N117 carries N-linked (GlcNAc...) asparagine glycosylation. The region spanning 142-223 (CPTCVGEHSK…INIVEKALFT (82 aa)) is the UPAR/Ly6 domain. The GPI-anchor amidated alanine moiety is linked to residue A225. A propeptide spans 226–246 (GTPCRSPSWGILLGLLFAFKG) (removed in mature form).

It is found in the cell membrane. This is Ly6/PLAUR domain-containing protein 4 (LYPD4) from Bos taurus (Bovine).